Here is a 313-residue protein sequence, read N- to C-terminus: Biotin synthase (313 aa).

Residues 28–258 (NFGNDIELCS…LFPQARLRLS (231 aa)) form the Radical SAM core domain. Cysteine 46, cysteine 50, and cysteine 53 together coordinate [4Fe-4S] cluster. [2Fe-2S] cluster contacts are provided by cysteine 90, cysteine 121, cysteine 181, and arginine 256.

The protein belongs to the radical SAM superfamily. Biotin synthase family. As to quaternary structure, homodimer. It depends on [4Fe-4S] cluster as a cofactor. [2Fe-2S] cluster is required as a cofactor.

The enzyme catalyses (4R,5S)-dethiobiotin + (sulfur carrier)-SH + 2 reduced [2Fe-2S]-[ferredoxin] + 2 S-adenosyl-L-methionine = (sulfur carrier)-H + biotin + 2 5'-deoxyadenosine + 2 L-methionine + 2 oxidized [2Fe-2S]-[ferredoxin]. The protein operates within cofactor biosynthesis; biotin biosynthesis; biotin from 7,8-diaminononanoate: step 2/2. Its function is as follows. Catalyzes the conversion of dethiobiotin (DTB) to biotin by the insertion of a sulfur atom into dethiobiotin via a radical-based mechanism. This is Biotin synthase from Francisella tularensis subsp. tularensis (strain WY96-3418).